A 1270-amino-acid chain; its full sequence is DNA-directed RNA polymerase subunit beta (1270 aa).

It belongs to the RNA polymerase beta chain family. The RNAP catalytic core consists of 2 alpha, 1 beta, 1 beta' and 1 omega subunit. When a sigma factor is associated with the core the holoenzyme is formed, which can initiate transcription.

It carries out the reaction RNA(n) + a ribonucleoside 5'-triphosphate = RNA(n+1) + diphosphate. In terms of biological role, DNA-dependent RNA polymerase catalyzes the transcription of DNA into RNA using the four ribonucleoside triphosphates as substrates. The polypeptide is DNA-directed RNA polymerase subunit beta (Porphyromonas cangingivalis).